The following is a 388-amino-acid chain: Protein TsgA homolog (388 aa).

Transmembrane regions (helical) follow at residues 12–32, 51–71, 77–97, 102–122, 137–157, 163–183, 203–223, 246–266, 272–292, 294–314, 331–351, and 356–376; these read CISFLSYALTGALITITGIFL, TFLNAGILSSIFISSWITNII, LIFGFILTIIATLILIFSHNL, ISMFMLGIISGITMSIGTYII, LTDSFFSMSGIIFPIITALII, WYWVYFIIGIIYLIIFLITIN, FSILCLSISALLYILGQLSFI, SAFWMAYMVGMWIFSFILKFF, IITLSGISLFLMSLFNIFYDY, LLYIIILSLGFFSSAIYTIII, YILTSGTVGTLLTFIITGPIV, and IFSALLVSNILYGIVFFLVII.

It belongs to the major facilitator superfamily. TsgA family.

Its subcellular location is the cell membrane. The protein is Protein TsgA homolog of Buchnera aphidicola subsp. Baizongia pistaciae (strain Bp).